The primary structure comprises 326 residues: Immune-associated nucleotide-binding protein 4 (326 aa).

The AIG1-type G domain maps to 17–225 (EPIKNIVLVG…FTDEMHRKIQ (209 aa)). The interval 26–33 (GRTGNGKS) is G1. Residues 26 to 34 (GRTGNGKSA) and Ser47 each bind GTP. The segment at 53-57 (GVTMK) is G2. A G3 region spans residues 75-78 (DTPG). Residues 145–148 (TGGD) are G4. Positions 184-186 (DNR) are G5. GTP is bound at residue Asn185. Residues 217–241 (TDEMHRKIQKEAETLREQQKEVESK) adopt a coiled-coil conformation.

Belongs to the TRAFAC class TrmE-Era-EngA-EngB-Septin-like GTPase superfamily. AIG1/Toc34/Toc159-like paraseptin GTPase family. IAN subfamily. In terms of tissue distribution, expressed in radicles of the germinating seeds.

The chain is Immune-associated nucleotide-binding protein 4 from Arabidopsis thaliana (Mouse-ear cress).